A 430-amino-acid polypeptide reads, in one-letter code: Adenylosuccinate synthetase (430 aa).

Residues G12–K18 and G40–T42 each bind GTP. D13 (proton acceptor) is an active-site residue. The Mg(2+) site is built by D13 and G40. IMP-binding positions include D13 to K16, N38 to H41, T128, R142, Q223, T238, and R302. Residue H41 is the Proton donor of the active site. Substrate is bound at residue T298–R304. GTP-binding positions include R304, L330 to D332, and S412 to G414.

It belongs to the adenylosuccinate synthetase family. As to quaternary structure, homodimer. Mg(2+) serves as cofactor.

Its subcellular location is the cytoplasm. It catalyses the reaction IMP + L-aspartate + GTP = N(6)-(1,2-dicarboxyethyl)-AMP + GDP + phosphate + 2 H(+). It functions in the pathway purine metabolism; AMP biosynthesis via de novo pathway; AMP from IMP: step 1/2. In terms of biological role, plays an important role in the de novo pathway of purine nucleotide biosynthesis. Catalyzes the first committed step in the biosynthesis of AMP from IMP. This chain is Adenylosuccinate synthetase, found in Listeria innocua serovar 6a (strain ATCC BAA-680 / CLIP 11262).